The primary structure comprises 935 residues: MTELKAKGPRAPHVAGGPPSPEVGSPLLCRPAAGPFQGSQTSDTLPEVSATPISLDGLLFPRPCQGQDPLDEKTQDQQSLSDVEGAYSRAEATRGTGGSSSRPPEKDSGLLDSVLDTLLAPSGPGQSQPSPPACEVTSSWCLFGPELPEDPPAAPATQRVLSPLMSRSGGKAGDSSGTAAAHKVLPRGLSPSRQLLLPASGSPHWSGAPVKPSPQPAAVEVEEEDGSESEDSAGPLLKGKPRALGGAAAGGGAAAVPPGAAAGGVALVPKEDSRFSAPRVALVEQDAPMAPGRSPLATTTMDFTHVPILPLNHALLAARTRQLLEEESYDGGAGAASAFAPPRSSPSASSTPVAVGDFPDCAYPPDAHPKDDAYPLYGDFQPPALKIKEEEEGAEVSARSPRSYLVAGANPAAFPDFPLGPPPPLPPRAPPSRPGEAAVTAAPAGASVSSASSSGSTLECILYKAEGAPPQQGPFAPPPCKAQGAGGCLLPRDGLPSTSTSASAAAAGAAPALYPALGLNGLPQLGYQAAVLKEGLQQVYPPYLNYLRPDSEASQSPQYSFESLPQKICLICGDEASGCHYGVLTCGSCKVFFKRAMEGQHNYLCAGRNDCIVDKIRRKNCPACRLRKCCQAGMVLGGRKFKKFNKVRVMRALDAVALPQPVGIPNESQALSQRFTFSPGQDIQLIPPLINLLVSIEPDVIYAGHDNSKPDTSSSLLTSLNQLGERQLLSVVKWSKLLPGFRNLHIDDQITLIQYSWMSLMVFGLGWRSYKHVSGQMLYFAPDLILNEQRMKESSFYSLCLTMWQIPQEFVKLQVSQEEFLCMKVLLLLNTIPLEGLRSQTQFEEMRSSYIRELIKAIGLRQKGVVSSSQRFYQLTKLLDNLHDLVKQLHLYCLNTFIQSRALSVEFPEMMSEVIAAQLPKILAGMVKPLLFHKK.

Residues Met-1–Leu-164 are AF3; mediates transcriptional activation. A disordered region spans residues Met-1–Val-256. Residues Met-1–Ile-568 form a modulating, Pro-Rich region. Ser-20 bears the Phosphoserine mark. Positions Leu-55–Leu-59 match the LXXL motif 1 motif. Ser-81 bears the Phosphoserine mark. An LXXL motif 2 motif is present at residues Leu-115–Leu-119. Phosphoserine is present on residues Ser-130 and Ser-162. Residues Met-165–His-305 form a mediates transcriptional transrepression region. A Nuclear localization signal motif is present at residues Lys-183–Arg-187. Ser-190 and Ser-213 each carry phosphoserine. Positions Glu-220–Asp-231 are enriched in acidic residues. Residues Ser-232 to Gly-246 show a composition bias toward low complexity. Phosphoserine; by MAPK1 is present on Ser-294. Residues Ser-328–Val-353 form a disordered region. Positions Ala-335–Ser-350 are enriched in low complexity. Ser-345 is modified (phosphoserine; by MAPK). A Glycyl lysine isopeptide (Lys-Gly) (interchain with G-Cter in SUMO); alternate cross-link involves residue Lys-388. Lys-388 participates in a covalent cross-link: Glycyl lysine isopeptide (Lys-Gly) (interchain with G-Cter in ubiquitin); alternate. Phosphoserine; by CDK2 is present on Ser-400. The interval Pro-415 to Ser-452 is disordered. The segment covering Pro-418 to Arg-433 has biased composition (pro residues). The span at Pro-434–Ser-452 shows a compositional bias: low complexity. Residues Ser-456 to Arg-548 are AF1; mediates transcriptional activation. Lys-533 is covalently cross-linked (Glycyl lysine isopeptide (Lys-Gly) (interchain with G-Cter in SUMO)). 2 NR C4-type zinc fingers span residues Cys-569–Cys-589 and Cys-605–Cys-629. The segment at residues Cys-569–Phe-641 is a DNA-binding region (nuclear receptor). A Phosphoserine modification is found at Ser-678. Residues Gln-681–Ile-915 enclose the NR LBD domain. The tract at residues Leu-689–Lys-935 is AF2; mediates transcriptional activation. Progesterone is bound at residue Arg-768.

The protein belongs to the nuclear hormone receptor family. As to quaternary structure, interacts with SMARD1 and UNC45A. Interacts with CUEDC2; the interaction promotes ubiquitination, decreases sumoylation, and represses transcriptional activity. Interacts with PIAS3; the interaction promotes sumoylation of PR in a hormone-dependent manner, inhibits DNA-binding, and alters nuclear export. Interacts with SP1; the interaction requires ligand-induced phosphorylation on Ser-345 by ERK1/2-MAPK. Interacts with PRMT2. Interacts with NCOA2 and NCOA1. Interacts with KLF9. Interacts with GTF2B. In terms of processing, phosphorylated on multiple serine sites. Several of these sites are hormone-dependent. Phosphorylation on Ser-294 is highly hormone-dependent and modulates ubiquitination and sumoylation on Lys-388. Phosphorylation on Ser-345 also requires induction by hormone. Basal phosphorylation on Ser-81, Ser-162, Ser-190 and Ser-400 is increased in response to progesterone and can be phosphorylated in vitro by the CDK2-A1 complex. Increased levels of phosphorylation on Ser-400 also in the presence of EGF, heregulin, IGF, PMA and FBS. Phosphorylation at this site by CDK2 is ligand-independent, and increases nuclear translocation and transcriptional activity. Phosphorylation at Ser-162 and Ser-294, but not at Ser-190, is impaired during the G(2)/M phase of the cell cycle. Phosphorylation on Ser-345 by ERK1/2 MAPK is required for interaction with SP1. Post-translationally, sumoylation is hormone-dependent and represses transcriptional activity. Sumoylation on all three sites is enhanced by PIAS3. Desumoylated by SENP1. Sumoylation on Lys-388, the main site of sumoylation, is repressed by ubiquitination on the same site, and modulated by phosphorylation at Ser-294. Ubiquitination is hormone-dependent and represses sumoylation on the same site. Promoted by MAPK-mediated phosphorylation on Ser-294. Ubiquitinated by UBR5, leading to its degradation: UBR5 specifically recognizes and binds ligand-bound PGR when it is not associated with coactivators (NCOAs). In presence of NCOAs, the UBR5-degron is not accessible, preventing its ubiquitination and degradation. In terms of processing, palmitoylated by ZDHHC7 and ZDHHC21. Palmitoylation is required for plasma membrane targeting and for rapid intracellular signaling via ERK and AKT kinases and cAMP generation.

The protein localises to the nucleus. The protein resides in the cytoplasm. Its function is as follows. The steroid hormones and their receptors are involved in the regulation of eukaryotic gene expression and affect cellular proliferation and differentiation in target tissues. Transcriptional activator of several progesteron-dependent promoters in a variety of cell types. Involved in activation of SRC-dependent MAPK signaling on hormone stimulation. In Macaca sylvanus (Barbary macaque), this protein is Progesterone receptor (PGR).